A 405-amino-acid polypeptide reads, in one-letter code: Putative arsenical pump-driving ATPase (405 aa).

8–15 (GKGGVGKT) contributes to the ATP binding site.

It belongs to the arsA ATPase family.

The catalysed reaction is arsenite(in) + ATP + H2O = arsenite(out) + ADP + phosphate + H(+). Anion-transporting ATPase. Catalyzes the extrusion of arsenite. This Chlorobaculum tepidum (strain ATCC 49652 / DSM 12025 / NBRC 103806 / TLS) (Chlorobium tepidum) protein is Putative arsenical pump-driving ATPase.